The sequence spans 173 residues: Regulator of ribonuclease activity A (173 aa).

Belongs to the RraA family. As to quaternary structure, homotrimer. Binds to both RNA-binding sites in the C-terminal region of Rne and to RhlB.

Its subcellular location is the cytoplasm. Globally modulates RNA abundance by binding to RNase E (Rne) and regulating its endonucleolytic activity. Can modulate Rne action in a substrate-dependent manner by altering the composition of the degradosome. Modulates RNA-binding and helicase activities of the degradosome. This is Regulator of ribonuclease activity A from Vibrio vulnificus (strain CMCP6).